The primary structure comprises 869 residues: Eukaryotic translation initiation factor 3 subunit C (869 aa).

Disordered stretches follow at residues 1–92 and 182–242; these read MSRF…KSAK and IKKA…VGKG. Residues 14-55 are compositionally biased toward acidic residues; that stretch reads SSDEEEDLYSDDEEVQEQPEEESSEDDSEEDDDDDDDSDSSS. The span at 185 to 203 shows a compositional bias: basic and acidic residues; sequence ASKEHQKDIDSFRADKDAY. One can recognise a PCI domain in the interval 607-781; it reads FHMHINLELL…SSIIFRKGVE (175 aa). A disordered region spans residues 803–869; it reads NERTLETRTQ…ALGAAVGSRA (67 aa). Residues 823-843 are compositionally biased toward gly residues; sequence GRGGRGGNRGGRGGGRGGRGG.

This sequence belongs to the eIF-3 subunit C family. Component of the eukaryotic translation initiation factor 3 (eIF-3) complex.

The protein resides in the cytoplasm. Its function is as follows. Component of the eukaryotic translation initiation factor 3 (eIF-3) complex, which is involved in protein synthesis of a specialized repertoire of mRNAs and, together with other initiation factors, stimulates binding of mRNA and methionyl-tRNAi to the 40S ribosome. The eIF-3 complex specifically targets and initiates translation of a subset of mRNAs involved in cell proliferation. The chain is Eukaryotic translation initiation factor 3 subunit C (nip1) from Botryotinia fuckeliana (strain B05.10) (Noble rot fungus).